We begin with the raw amino-acid sequence, 415 residues long: [Pyruvate dehydrogenase (acetyl-transferring)] kinase isozyme 3, mitochondrial (415 aa).

One can recognise a Histidine kinase domain in the interval 131–362; that stretch reads IEYKEKFGFD…DAVIYLKALS (232 aa). Residue 247–254 coordinates ATP; sequence ELFKNSMR. Position 278 is an N6-succinyllysine (K278). ATP contacts are provided by residues D287, 306-307, and 323-328; these read ST and GFGYGL. A disordered region spans residues 383-415; the sequence is TPEADDWSNPSSEPRDASKYKAKQDKIKSNRTF. Residues 395-415 show a composition bias toward basic and acidic residues; sequence EPRDASKYKAKQDKIKSNRTF.

Belongs to the PDK/BCKDK protein kinase family. Homodimer. Interacts with the pyruvate dehydrogenase complex subunit DLAT, and is part of the multimeric pyruvate dehydrogenase complex that contains multiple copies of pyruvate dehydrogenase (E1), dihydrolipoamide acetyltransferase (DLAT, E2) and lipoamide dehydrogenase (DLD, E3).

It localises to the mitochondrion matrix. It catalyses the reaction L-seryl-[pyruvate dehydrogenase E1 alpha subunit] + ATP = O-phospho-L-seryl-[pyruvate dehydrogenase E1 alpha subunit] + ADP + H(+). Inhibits pyruvate dehydrogenase activity by phosphorylation of the E1 subunit PDHA1, and thereby regulates glucose metabolism and aerobic respiration. Can also phosphorylate PDHA2. Decreases glucose utilization and increases fat metabolism in response to prolonged fasting, and as adaptation to a high-fat diet. Plays a role in glucose homeostasis and in maintaining normal blood glucose levels in function of nutrient levels and under starvation. Plays a role in the generation of reactive oxygen species. The sequence is that of [Pyruvate dehydrogenase (acetyl-transferring)] kinase isozyme 3, mitochondrial (Pdk3) from Mus musculus (Mouse).